A 432-amino-acid polypeptide reads, in one-letter code: Tubulin-specific chaperone cofactor E-like protein (432 aa).

7 LRR repeats span residues Ala69 to Asn94, Leu95 to Pro117, Val118 to Leu140, Leu143 to Ser167, Thr168 to Lys191, Phe193 to Gln217, and Leu218 to Arg242. The tract at residues Ile254 to Phe295 is LRRCT. A ubiquitin-like (UBL) region spans residues Val324–Ile415.

It is found in the cytoplasm. The protein localises to the cytoskeleton. Acts as a regulator of tubulin stability. Involved in microtubule-dependent neuronal function. May be involved in tubulin acetylation/deacetylation pathway. The protein is Tubulin-specific chaperone cofactor E-like protein of Caenorhabditis elegans.